The sequence spans 203 residues: Peptidyl-tRNA hydrolase (203 aa).

Tyr14 is a tRNA binding site. The active-site Proton acceptor is His19. TRNA contacts are provided by Tyr64, Asn66, and Asn112.

This sequence belongs to the PTH family. As to quaternary structure, monomer.

The protein resides in the cytoplasm. It carries out the reaction an N-acyl-L-alpha-aminoacyl-tRNA + H2O = an N-acyl-L-amino acid + a tRNA + H(+). In terms of biological role, hydrolyzes ribosome-free peptidyl-tRNAs (with 1 or more amino acids incorporated), which drop off the ribosome during protein synthesis, or as a result of ribosome stalling. Functionally, catalyzes the release of premature peptidyl moieties from peptidyl-tRNA molecules trapped in stalled 50S ribosomal subunits, and thus maintains levels of free tRNAs and 50S ribosomes. The chain is Peptidyl-tRNA hydrolase from Methylobacterium nodulans (strain LMG 21967 / CNCM I-2342 / ORS 2060).